The following is a 354-amino-acid chain: Protein RecA (354 aa).

67 to 74 contributes to the ATP binding site; sequence GPESSGKT.

Belongs to the RecA family.

It localises to the cytoplasm. Functionally, can catalyze the hydrolysis of ATP in the presence of single-stranded DNA, the ATP-dependent uptake of single-stranded DNA by duplex DNA, and the ATP-dependent hybridization of homologous single-stranded DNAs. It interacts with LexA causing its activation and leading to its autocatalytic cleavage. This Hamiltonella defensa subsp. Acyrthosiphon pisum (strain 5AT) protein is Protein RecA.